The primary structure comprises 173 residues: Small ribosomal subunit protein uS5 (173 aa).

One can recognise an S5 DRBM domain in the interval 17–80 (WQERVIQIRR…ADGKKQLIDV (64 aa)).

It belongs to the universal ribosomal protein uS5 family. Part of the 30S ribosomal subunit. Contacts proteins S4 and S8.

Functionally, with S4 and S12 plays an important role in translational accuracy. Its function is as follows. Located at the back of the 30S subunit body where it stabilizes the conformation of the head with respect to the body. This Rippkaea orientalis (strain PCC 8801 / RF-1) (Cyanothece sp. (strain PCC 8801)) protein is Small ribosomal subunit protein uS5.